The sequence spans 443 residues: MGQGPSGGLNRQGDRKPDGGEKKEKKFEPAAPPARVGRKQRKQKGPEAAARLPTVTPSTKCKLRLLKLERIKDYLLMEEEFVANQERLKPQEEKAEEDRSKVDDLRGTPMSVGNLEELIDENHAIVSSSVGPEYYVGILSFVDKDQLEPGCSILMHNKVLSVVGILQDEVDPMVSVMKVEKAPLESYADIGGLEAQIQEIKEAVELPLTHPELYEDIGIKPPKGVILYGEPGTGKTLLAKAVANSTSATFLRVVGSELIQKYLGDGPKLVRELFRVADDLSPSIVFIDEIDAVGTKRYDANSGGEREIQRTMLELLNQLDGFDSRGDVKVILATNRIESLDPALLRPGRIDRKIEFPLPDIKTRRRIFQIHTSKMTLAEDVNLEEFVMTKDEFSGADIKAICTEAGLLALRERRMKVTHVDFKKAKEKVMFKKKEGVPEGLYM.

2 disordered regions span residues 1 to 55 (MGQG…LPTV) and 87 to 108 (RLKP…LRGT). 2 stretches are compositionally biased toward basic and acidic residues: residues 12–28 (QGDR…KKFE) and 87–106 (RLKP…DDLR). 229–236 (GEPGTGKT) contacts ATP. Residues lysine 296 and lysine 433 each participate in a glycyl lysine isopeptide (Lys-Gly) (interchain with G-Cter in ubiquitin) cross-link.

Belongs to the AAA ATPase family. In terms of assembly, component of the 19S regulatory particle (RP/PA700) base subcomplex of the 26S proteasome. The 26S proteasome is composed of a core protease (CP), known as the 20S proteasome, capped at one or both ends by the 19S regulatory particle (RP/PA700). The RP/PA700 complex is composed of at least 17 different subunits in two subcomplexes, the base and the lid, which form the portions proximal and distal to the 20S proteolytic core, respectively. In terms of tissue distribution, preferentially expressed in the root and shoot apical meristem.

It localises to the cytoplasm. Its subcellular location is the nucleus. Its function is as follows. The 26S protease is involved in the ATP-dependent degradation of ubiquitinated proteins. The regulatory (or ATPase) complex confers ATP dependency and substrate specificity to the 26S complex. Acts redundantly with RPT2A in the regulation of gametogenesis. With RPT2A plays a critical role in 26S proteasome assembly. The protein is 26S proteasome regulatory subunit 4 homolog B of Arabidopsis thaliana (Mouse-ear cress).